A 436-amino-acid chain; its full sequence is Probable mediator of RNA polymerase II transcription subunit 26b (436 aa).

Positions proline 71–aspartate 111 are disordered. The TFIIS N-terminal domain maps to lysine 139–tryptophan 214. A disordered region spans residues histidine 263–aspartate 376. Composition is skewed to basic and acidic residues over residues asparagine 276–proline 290 and threonine 332–methionine 350. Residues glutamate 382 to arginine 402 are a coiled coil. A disordered region spans residues glutamate 408–lysine 436. Residues serine 427–lysine 436 are compositionally biased toward polar residues.

This sequence belongs to the Mediator complex subunit 26 family. Component of the Mediator complex.

The protein resides in the nucleus. In terms of biological role, component of the Mediator complex, a coactivator involved in the regulated transcription of nearly all RNA polymerase II-dependent genes. Mediator functions as a bridge to convey information from gene-specific regulatory proteins to the basal RNA polymerase II transcription machinery. The Mediator complex, having a compact conformation in its free form, is recruited to promoters by direct interactions with regulatory proteins and serves for the assembly of a functional preinitiation complex with RNA polymerase II and the general transcription factors. May play a role in transcription elongation. This chain is Probable mediator of RNA polymerase II transcription subunit 26b (MED26B), found in Arabidopsis thaliana (Mouse-ear cress).